We begin with the raw amino-acid sequence, 154 residues long: Probable chemoreceptor glutamine deamidase CheD (154 aa).

The protein belongs to the CheD family.

It catalyses the reaction L-glutaminyl-[protein] + H2O = L-glutamyl-[protein] + NH4(+). Functionally, probably deamidates glutamine residues to glutamate on methyl-accepting chemotaxis receptors (MCPs), playing an important role in chemotaxis. The polypeptide is Probable chemoreceptor glutamine deamidase CheD (Methanococcus maripaludis (strain C6 / ATCC BAA-1332)).